The primary structure comprises 324 residues: Olfactory receptor 52I1 (324 aa).

Over 1 to 29 (MLGPAYNHTMETPASFLLVGIPGLQSSHL) the chain is Extracellular. An N-linked (GlcNAc...) asparagine glycan is attached at Asn-7. The helical transmembrane segment at 30-50 (WLAISLSAMYITALLGNTLIV) threads the bilayer. The Cytoplasmic portion of the chain corresponds to 51–58 (TAIWMDST). A helical membrane pass occupies residues 59–79 (RHEPMYCFLCVLAAVDIVMAS). The Extracellular portion of the chain corresponds to 80–103 (SVVPKMVSIFCSGDSSISFSACFT). A disulfide bridge connects residues Cys-101 and Cys-193. The chain crosses the membrane as a helical span at residues 104 to 124 (QMFFVHLATAVETGLLLTMAF). Topologically, residues 125–143 (DRYVAICKPLHYKRILTPQ) are cytoplasmic. A helical membrane pass occupies residues 144 to 164 (VMLGMSMAVTIRAVTFMTPLS). Residues 165-200 (WMMNHLPFCGSNVVVHSYCKHIALARLACADPVPSS) are Extracellular-facing. A helical membrane pass occupies residues 201 to 221 (LYSLIGSSLMVGSDVAFIAAS). Over 222-241 (YILILRAVFDLSSKTAQLKA) the chain is Cytoplasmic. The helical transmembrane segment at 242–262 (LSTCGSHVGVMALYYLPGMAS) threads the bilayer. Topologically, residues 263 to 278 (IYAAWLGQDIVPLHTQ) are extracellular. Residues 279-299 (VLLADLYVIIPATLNPIIYGM) form a helical membrane-spanning segment. Topologically, residues 300–324 (RTKQLLEGIWSYLMHFLFDHSNLGS) are cytoplasmic.

The protein belongs to the G-protein coupled receptor 1 family.

The protein resides in the cell membrane. In terms of biological role, odorant receptor. This chain is Olfactory receptor 52I1 (OR52I1), found in Homo sapiens (Human).